We begin with the raw amino-acid sequence, 345 residues long: UPF0324 membrane protein Cgl0015/cg0018 (345 aa).

Helical transmembrane passes span 15–37 (LRTG…VLIA), 44–66 (FSGV…LIQL), 81–103 (LLRL…SLGF), 105–124 (MLAV…ILMG), 134–156 (VLLI…EGVT), 163–185 (VVTA…PFAT), 205–227 (EIAQ…AVVV), 261–280 (VVPL…STVA), 285–307 (VIAA…LGCG), and 320–342 (PFIL…TLLT).

This sequence belongs to the UPF0324 family.

It localises to the cell membrane. In Corynebacterium glutamicum (strain ATCC 13032 / DSM 20300 / JCM 1318 / BCRC 11384 / CCUG 27702 / LMG 3730 / NBRC 12168 / NCIMB 10025 / NRRL B-2784 / 534), this protein is UPF0324 membrane protein Cgl0015/cg0018.